The following is a 309-amino-acid chain: Probable porphobilinogen deaminase (309 aa).

S-(dipyrrolylmethanemethyl)cysteine is present on Cys233.

It belongs to the HMBS family. Dipyrromethane is required as a cofactor.

The catalysed reaction is 4 porphobilinogen + H2O = hydroxymethylbilane + 4 NH4(+). It functions in the pathway porphyrin-containing compound metabolism; protoporphyrin-IX biosynthesis; coproporphyrinogen-III from 5-aminolevulinate: step 2/4. In terms of biological role, tetrapolymerization of the monopyrrole PBG into the hydroxymethylbilane pre-uroporphyrinogen in several discrete steps. The sequence is that of Probable porphobilinogen deaminase from Methanococcoides burtonii (strain DSM 6242 / NBRC 107633 / OCM 468 / ACE-M).